A 239-amino-acid chain; its full sequence is Major centromere autoantigen B (239 aa).

Residues 28-185 are disordered; sequence AGFGGGPNAT…DDEVPVPSFG (158 aa). Phosphothreonine occurs at positions 37 and 39. Acidic residues-rich tracts occupy residues 46-117 and 148-179; these read GEEE…EAED and GEED…DDEV. The homodimerization stretch occupies residues 176–239; the sequence is DDEVPVPSFG…AGARGLGHQS (64 aa).

Antiparallel homodimer. Interacts with CENPT. Identified in a centromere complex containing histones H2A, H2B and H4, and at least CENPA, CENPB, CENPC, CENPT, CENPN, HJURP, SUPT16H, SSRP1 and RSF1. Poly-ADP-ribosylated by PARP1. Post-translationally, N-terminally methylated by METTL11A/NTM1. Alpha-N-methylation is stimulated in response extracellular stimuli, including increased cell density and heat shock, and seems to facilitate binding to CENP-B boxes. Chromatin-bound CENP-B is primarily trimethylated.

The protein localises to the nucleus. It is found in the chromosome. The protein resides in the centromere. Interacts with centromeric heterochromatin in chromosomes and binds to a specific 17 bp subset of alphoid satellite DNA, called the CENP-B box. May organize arrays of centromere satellite DNA into a higher-order structure which then directs centromere formation and kinetochore assembly in mammalian chromosomes. This is Major centromere autoantigen B (CENPB) from Ovis aries (Sheep).